A 202-amino-acid polypeptide reads, in one-letter code: LexA repressor (202 aa).

Positions arginine 28–lysine 48 form a DNA-binding region, H-T-H motif. Residues serine 119 and lysine 156 each act as for autocatalytic cleavage activity in the active site.

Belongs to the peptidase S24 family. Homodimer.

The catalysed reaction is Hydrolysis of Ala-|-Gly bond in repressor LexA.. In terms of biological role, represses a number of genes involved in the response to DNA damage (SOS response), including recA and lexA. Binds to the 16 bp palindromic sequence 5'-CTGTATATATATACAG-3'. In the presence of single-stranded DNA, RecA interacts with LexA causing an autocatalytic cleavage which disrupts the DNA-binding part of LexA, leading to derepression of the SOS regulon and eventually DNA repair. The polypeptide is LexA repressor (Pectobacterium carotovorum subsp. carotovorum (strain PC1)).